We begin with the raw amino-acid sequence, 374 residues long: Ribosomal RNA large subunit methyltransferase G (374 aa).

The protein belongs to the methyltransferase superfamily. RlmG family.

It is found in the cytoplasm. It carries out the reaction guanosine(1835) in 23S rRNA + S-adenosyl-L-methionine = N(2)-methylguanosine(1835) in 23S rRNA + S-adenosyl-L-homocysteine + H(+). Specifically methylates the guanine in position 1835 (m2G1835) of 23S rRNA. In Photobacterium profundum (strain SS9), this protein is Ribosomal RNA large subunit methyltransferase G.